Reading from the N-terminus, the 519-residue chain is cAMP-dependent protein kinase catalytic subunit (519 aa).

The segment at 1–195 (MLPDTGILSP…SQTLQKAENA (195 aa)) is disordered. Polar residues-rich tracts occupy residues 10–25 (PFTT…SQTL), 116–159 (VTPS…TSPI), and 173–191 (TPVN…TLQK). The Protein kinase domain occupies 208 to 463 (FNFQRTLGTG…SRSVLEHPWF (256 aa)). ATP is bound by residues 214–222 (LGTGSFGRV) and Lys237. The Proton acceptor role is filled by Asp331. The AGC-kinase C-terminal domain maps to 464-519 (AEVNWERLLSKQIEPPYVPPVRGGIGDASLFDKYPEETEEYGKDGPDQYGHFFTDF).

Belongs to the protein kinase superfamily. Ser/Thr protein kinase family.

The catalysed reaction is L-seryl-[protein] + ATP = O-phospho-L-seryl-[protein] + ADP + H(+). It carries out the reaction L-threonyl-[protein] + ATP = O-phospho-L-threonyl-[protein] + ADP + H(+). Activated by cAMP. Functionally, functions downstream of adenylate cyclase to regulate trap-development for nematode capture. The sequence is that of cAMP-dependent protein kinase catalytic subunit from Arthrobotrys oligospora (strain ATCC 24927 / CBS 115.81 / DSM 1491) (Nematode-trapping fungus).